Consider the following 105-residue polypeptide: Cell division protein FtsB (105 aa).

Residues 1–3 (MRI) are Cytoplasmic-facing. The chain crosses the membrane as a helical span at residues 4 to 21 (VIYSMLVLLIAIQYPLWL). Residues 22–105 (GKGGWLKVYE…DTAKASTVKQ (84 aa)) are Periplasmic-facing. A coiled-coil region spans residues 32–60 (MEKQVELQEAKNSLLALRNAKLEGDVKDL).

The protein belongs to the FtsB family. Part of a complex composed of FtsB, FtsL and FtsQ.

The protein localises to the cell inner membrane. Functionally, essential cell division protein. May link together the upstream cell division proteins, which are predominantly cytoplasmic, with the downstream cell division proteins, which are predominantly periplasmic. The sequence is that of Cell division protein FtsB from Polynucleobacter asymbioticus (strain DSM 18221 / CIP 109841 / QLW-P1DMWA-1) (Polynucleobacter necessarius subsp. asymbioticus).